The primary structure comprises 589 residues: NADP-dependent malic enzyme (589 aa).

The active-site Proton donor is the Tyr137. Arg190 is an NAD(+) binding site. Lys208 functions as the Proton acceptor in the catalytic mechanism. 3 residues coordinate a divalent metal cation: Glu280, Asp281, and Asp304. Asp304 contributes to the NAD(+) binding site. 333 to 349 (LFLGAGEAGTGIAELIA) is an NADP(+) binding site. An NAD(+)-binding site is contributed by Asn445.

The protein belongs to the malic enzymes family. Homotetramer. Mg(2+) serves as cofactor. The cofactor is Mn(2+).

Its subcellular location is the cytoplasm. The catalysed reaction is (S)-malate + NADP(+) = pyruvate + CO2 + NADPH. It carries out the reaction oxaloacetate + H(+) = pyruvate + CO2. In Phaseolus vulgaris (Kidney bean), this protein is NADP-dependent malic enzyme (ME1).